The sequence spans 25 residues: MEFSPRAAELTTLLESRISNFYTNI.

It belongs to the ATPase alpha/beta chains family. As to quaternary structure, F-type ATPases have 2 components, CF(1) - the catalytic core - and CF(0) - the membrane proton channel. CF(1) has five subunits: alpha(3), beta(3), gamma(1), delta(1), epsilon(1). CF(0) has three main subunits: a, b and c.

It localises to the mitochondrion. The protein localises to the mitochondrion inner membrane. Mitochondrial membrane ATP synthase (F(1)F(0) ATP synthase or Complex V) produces ATP from ADP in the presence of a proton gradient across the membrane which is generated by electron transport complexes of the respiratory chain. F-type ATPases consist of two structural domains, F(1) - containing the extramembraneous catalytic core, and F(0) - containing the membrane proton channel, linked together by a central stalk and a peripheral stalk. During catalysis, ATP synthesis in the catalytic domain of F(1) is coupled via a rotary mechanism of the central stalk subunits to proton translocation. Subunits alpha and beta form the catalytic core in F(1). Rotation of the central stalk against the surrounding alpha(3)beta(3) subunits leads to hydrolysis of ATP in three separate catalytic sites on the beta subunits. Subunit alpha does not bear the catalytic high-affinity ATP-binding sites. The sequence is that of ATP synthase subunit alpha, mitochondrial (ATPA) from Spinacia oleracea (Spinach).